A 120-amino-acid polypeptide reads, in one-letter code: Prophage bactoprenol-linked glucose translocase homolog (120 aa).

Over 1-9 the chain is Cytoplasmic; that stretch reads MLKLFAKYT. A helical membrane pass occupies residues 10–30; sequence SIGVLNTLIHWVVFGVCIYVA. The Periplasmic segment spans residues 31-33; the sequence is HTN. Residues 34-54 traverse the membrane as a helical segment; the sequence is QALANFAGFVVAVSFSFFANA. Over 55–64 the chain is Cytoplasmic; that stretch reads KFTFKASTTT. Residues 65–85 traverse the membrane as a helical segment; it reads MRYMLYVGFMGTLSATVGWAA. Topologically, residues 86 to 88 are periplasmic; it reads DRC. Residues 89–109 form a helical membrane-spanning segment; it reads ALPPMITLVTFSAISLVCGFV. The Cytoplasmic portion of the chain corresponds to 110–120; the sequence is YSKFIVFRDAK.

This sequence belongs to the GtrA family.

It localises to the cell inner membrane. In terms of biological role, involved in O antigen modification. Involved in the translocation of bactoprenol-linked glucose across the cytoplasmic membrane. In Escherichia coli (strain K12), this protein is Prophage bactoprenol-linked glucose translocase homolog (yfdG).